The primary structure comprises 282 residues: NADPH-dependent 7-cyano-7-deazaguanine reductase (282 aa).

Residue 88–90 coordinates substrate; that stretch reads IES. 90 to 91 lines the NADPH pocket; it reads SK. Cysteine 190 functions as the Thioimide intermediate in the catalytic mechanism. Aspartate 197 serves as the catalytic Proton donor. 229–230 is a substrate binding site; it reads HE. 258–259 is an NADPH binding site; the sequence is RG.

This sequence belongs to the GTP cyclohydrolase I family. QueF type 2 subfamily. Homodimer.

It is found in the cytoplasm. It carries out the reaction 7-aminomethyl-7-carbaguanine + 2 NADP(+) = 7-cyano-7-deazaguanine + 2 NADPH + 3 H(+). It functions in the pathway tRNA modification; tRNA-queuosine biosynthesis. Catalyzes the NADPH-dependent reduction of 7-cyano-7-deazaguanine (preQ0) to 7-aminomethyl-7-deazaguanine (preQ1). The sequence is that of NADPH-dependent 7-cyano-7-deazaguanine reductase from Shigella flexneri serotype 5b (strain 8401).